A 708-amino-acid polypeptide reads, in one-letter code: Elongation factor G 1 (708 aa).

Residues 9–295 (AKVRNIGIMA…AVVRYLPTPL (287 aa)) form the tr-type G domain. GTP is bound by residues 18-25 (AHIDAGKT), 86-90 (DTPGH), and 140-143 (NKLD).

The protein belongs to the TRAFAC class translation factor GTPase superfamily. Classic translation factor GTPase family. EF-G/EF-2 subfamily.

It localises to the cytoplasm. In terms of biological role, catalyzes the GTP-dependent ribosomal translocation step during translation elongation. During this step, the ribosome changes from the pre-translocational (PRE) to the post-translocational (POST) state as the newly formed A-site-bound peptidyl-tRNA and P-site-bound deacylated tRNA move to the P and E sites, respectively. Catalyzes the coordinated movement of the two tRNA molecules, the mRNA and conformational changes in the ribosome. This Streptomyces coelicolor (strain ATCC BAA-471 / A3(2) / M145) protein is Elongation factor G 1 (fusA).